The chain runs to 678 residues: Penicillin-binding protein activator LpoA (678 aa).

Positions 1 to 26 (MVPSTFSRLKAARCLPVVLAALIFAG) are cleaved as a signal peptide. Cysteine 27 is lipidated: N-palmitoyl cysteine. A lipid anchor (S-diacylglycerol cysteine) is attached at cysteine 27. Disordered stretches follow at residues 302–340 (DVAE…PVSA) and 496–528 (ALTG…DDQF). Low complexity-rich tracts occupy residues 330–340 (QPAAQPVPVSA) and 513–528 (TTNN…DDQF).

It belongs to the LpoA family. Interacts with PBP1a.

It is found in the cell outer membrane. Regulator of peptidoglycan synthesis that is essential for the function of penicillin-binding protein 1A (PBP1a). This chain is Penicillin-binding protein activator LpoA, found in Shigella sonnei (strain Ss046).